We begin with the raw amino-acid sequence, 391 residues long: 3-ketoacyl-CoA thiolase (391 aa).

The active-site Acyl-thioester intermediate is Cys95. Catalysis depends on proton acceptor residues His347 and Cys377.

This sequence belongs to the thiolase-like superfamily. Thiolase family. Heterotetramer of two alpha chains (FadB) and two beta chains (FadA).

The protein resides in the cytoplasm. It carries out the reaction an acyl-CoA + acetyl-CoA = a 3-oxoacyl-CoA + CoA. Its pathway is lipid metabolism; fatty acid beta-oxidation. Catalyzes the final step of fatty acid oxidation in which acetyl-CoA is released and the CoA ester of a fatty acid two carbons shorter is formed. This chain is 3-ketoacyl-CoA thiolase, found in Pseudomonas putida (strain ATCC 47054 / DSM 6125 / CFBP 8728 / NCIMB 11950 / KT2440).